Consider the following 302-residue polypeptide: Mitochondrial glycine transporter (302 aa).

Solcar repeat units follow at residues 22–112, 119–203, and 213–297; these read HPVF…LKHH, PKPL…AKKL, and FSPV…MMEK. Transmembrane regions (helical) follow at residues 28-53, 87-113, 125-150, 178-201, 217-243, and 272-290; these read FVCG…TRLQ, GVSP…KHHF, VMLG…TRYE, GLTA…TRAK, LNFG…KTHI, and GGLP…AWTV.

It belongs to the mitochondrial carrier (TC 2.A.29) family. SLC25A38 subfamily.

Its subcellular location is the mitochondrion inner membrane. It catalyses the reaction glycine(in) = glycine(out). Mitochondrial glycine transporter that imports glycine into the mitochondrial matrix. Plays an important role in providing glycine for the first enzymatic step in heme biosynthesis, the condensation of glycine with succinyl-CoA to produce 5-aminolevulinate (ALA) in the mitochondrial matrix. Required during erythropoiesis. In terms of biological role, may play a role as pro-apoptotic protein that induces caspase-dependent apoptosis. The polypeptide is Mitochondrial glycine transporter (Xenopus tropicalis (Western clawed frog)).